The primary structure comprises 372 residues: Queuine tRNA-ribosyltransferase (372 aa).

Asp92 acts as the Proton acceptor in catalysis. Residues 92-96 (DSGGF), Asp146, Gln188, and Gly215 each bind substrate. The RNA binding stretch occupies residues 246 to 252 (GIGTLRE). The Nucleophile role is filled by Asp265. The RNA binding; important for wobble base 34 recognition stretch occupies residues 270–274 (TRLGR). Positions 303, 305, 308, and 334 each coordinate Zn(2+).

This sequence belongs to the queuine tRNA-ribosyltransferase family. Homodimer. Within each dimer, one monomer is responsible for RNA recognition and catalysis, while the other monomer binds to the replacement base PreQ1. Requires Zn(2+) as cofactor.

The catalysed reaction is 7-aminomethyl-7-carbaguanine + guanosine(34) in tRNA = 7-aminomethyl-7-carbaguanosine(34) in tRNA + guanine. The protein operates within tRNA modification; tRNA-queuosine biosynthesis. In terms of biological role, catalyzes the base-exchange of a guanine (G) residue with the queuine precursor 7-aminomethyl-7-deazaguanine (PreQ1) at position 34 (anticodon wobble position) in tRNAs with GU(N) anticodons (tRNA-Asp, -Asn, -His and -Tyr). Catalysis occurs through a double-displacement mechanism. The nucleophile active site attacks the C1' of nucleotide 34 to detach the guanine base from the RNA, forming a covalent enzyme-RNA intermediate. The proton acceptor active site deprotonates the incoming PreQ1, allowing a nucleophilic attack on the C1' of the ribose to form the product. After dissociation, two additional enzymatic reactions on the tRNA convert PreQ1 to queuine (Q), resulting in the hypermodified nucleoside queuosine (7-(((4,5-cis-dihydroxy-2-cyclopenten-1-yl)amino)methyl)-7-deazaguanosine). The chain is Queuine tRNA-ribosyltransferase from Prochlorococcus marinus (strain MIT 9303).